A 148-amino-acid polypeptide reads, in one-letter code: Ribonuclease pancreatic (148 aa).

An N-terminal signal peptide occupies residues 1 to 25 (MGLEKSLLLLPLLVLVLGCVQPSLG). Lys32 and Arg35 together coordinate substrate. Catalysis depends on His37, which acts as the Proton acceptor. 4 cysteine pairs are disulfide-bonded: Cys50/Cys108, Cys64/Cys119, Cys82/Cys134, and Cys89/Cys96. Residues 65–69 (KPVNT) and Lys90 each bind substrate. His143 serves as the catalytic Proton donor.

The protein belongs to the pancreatic ribonuclease family. In terms of assembly, monomer. Interacts with and forms tight 1:1 complexes with RNH1. Dimerization of two such complexes may occur. Interaction with RNH1 inhibits this protein. In terms of tissue distribution, pancreas.

Its subcellular location is the secreted. The enzyme catalyses an [RNA] containing cytidine + H2O = an [RNA]-3'-cytidine-3'-phosphate + a 5'-hydroxy-ribonucleotide-3'-[RNA].. It carries out the reaction an [RNA] containing uridine + H2O = an [RNA]-3'-uridine-3'-phosphate + a 5'-hydroxy-ribonucleotide-3'-[RNA].. Endonuclease that catalyzes the cleavage of RNA on the 3' side of pyrimidine nucleotides. Acts on single-stranded and double-stranded RNA. This Gerbillus nigeriae (Nigerian gerbil) protein is Ribonuclease pancreatic (RNASE1).